The following is a 791-amino-acid chain: MKSNQERSNECLPPKKREIPATSRPSEEKATALPSDNHCVEGVAWLPSTPGIRGHGGGRHGSAGTSGEHGLQGMGLHKALSAGLDYSPPSAPRSVPTANTLPTVYPPPQSGTPVSPVQYAHLSHTFQFIGSSQYSGPYAGFIPSQLISPSGNPVTSAVASAAGATTPSQRSQLEAYSTLLANMGSLSQAPGHKVEPPPQQHLSRAAGLVNPGSPPPPTQQNQYIHISSSPQSSGRATSPPPIPVHLHPHQTMIPHTLTLGPSSQVVVQYSDAGGHFVPRESTKKAESSRLQQAMQAKEVLNGEMEKSRRYGASSSVELSLGKASSKSVPHPYESRHVVVHPSPADYSSRDTSGVRGSVMVLPNSSTPSADLEAQQTTHREASPSTLNDKSGLHLGKPGHRSYALSPHTVIQTTHSASEPLPVGLPATAFYAGTQPPVIGYLSGQQQAITYAGGLPQHLVIPGNQPLLIPVGSPDMDTPGAASAIVTSSPQFAAVPHTFVTTALPKSENFNPEALVTQAAYPAMVQAQIHLPVVQSVASPTTASPTLPPYFMKGSIIQLANGELKKVEDLKTEDFIQSAEISNDLKIDSSTVERIEESHSPGVAVIQFAVGEHRAQVSVEVLVEYPFFVFGQGWSSCCPERTSQLFDLPCSKLSVGDVCISLTLKNLKNGSVKKGQPVDPASVLLKQAKTDSLAGSRHRYAEQENGINQGSAQVLSENGELKFPEKIGLPAAPFLSKIEPSKPTATRKRRWSAPETRKLEKSEDEPPLTLPKPSLIPQEVKICIEGRSNVGK.

Residues 1 to 30 (MKSNQERSNECLPPKKREIPATSRPSEEKA) are compositionally biased toward basic and acidic residues. The segment at 1-36 (MKSNQERSNECLPPKKREIPATSRPSEEKATALPSD) is disordered. K16 is covalently cross-linked (Glycyl lysine isopeptide (Lys-Gly) (interchain with G-Cter in SUMO)). A phosphoserine mark is found at S81 and S87. 2 disordered regions span residues 187–240 (SQAP…TSPP) and 298–402 (EVLN…HRSY). Residue K193 forms a Glycyl lysine isopeptide (Lys-Gly) (interchain with G-Cter in SUMO) linkage. Phosphoserine is present on S213. T218 is subject to Phosphothreonine. Polar residues-rich tracts occupy residues 219-236 (QQNQ…SGRA), 312-327 (ASSS…SSKS), and 362-388 (PNSS…TLND). At S229 the chain carries Phosphoserine. The self-association stretch occupies residues 470 to 580 (VGSPDMDTPG…TEDFIQSAEI (111 aa)). The tract at residues 514 to 791 (LVTQAAYPAM…CIEGRSNVGK (278 aa)) is interaction with USP7. The segment at 516-742 (TQAAYPAMVQ…FLSKIEPSKP (227 aa)) is RNA-binding. One can recognise an AXH domain in the interval 538–669 (SPTTASPTLP…SLTLKNLKNG (132 aa)). Residues K585, K672, and K721 each participate in a glycyl lysine isopeptide (Lys-Gly) (interchain with G-Cter in SUMO) cross-link. Residues 736–774 (KIEPSKPTATRKRRWSAPETRKLEKSEDEPPLTLPKPSL) are disordered. A Phosphoserine modification is found at S751. Residues 770 to 773 (PKPS) carry the Nuclear localization signal motif.

The protein belongs to the ATXN1 family. As to quaternary structure, homooligomer. Interacts with PQBP1, UBQLN4 and USP7. Interacts with ANP32A. Interacts with CIC. Directly interacts with RBPJ; this interaction is disrupted in the presence of Notch intracellular domain. Interacts with ATXN1L; competes with ATXN1L for RBPJ-binding. Found in a complex with CIC and ATXN1L. Ubiquitinated by UBE3A, leading to its degradation by the proteasome. The presence of poly-Gln repeats in trangenic models developed to replicate phenotypes of the spinocerebellar ataxia 1 disease (SCA1) impair ubiquitination and degradation, leading to accumulation of Atxn1 in neurons and subsequent toxicity. Post-translationally, sumoylation is dependent on nuclear localization and phosphorylation at Ser-751. In terms of tissue distribution, expressed in the cortex and hypothalamus (at protein level). Widely expressed. In brain, the pattern of distribution is limited to neuron populations.

It localises to the cytoplasm. Its subcellular location is the nucleus. Functionally, chromatin-binding factor that repress Notch signaling in the absence of Notch intracellular domain by acting as a CBF1 corepressor. Binds to the HEY promoter and might assist, along with NCOR2, RBPJ-mediated repression. May be involved in RNA metabolism. In concert with CIC and ATXN1L, involved in brain development. The sequence is that of Ataxin-1 (Atxn1) from Mus musculus (Mouse).